A 310-amino-acid polypeptide reads, in one-letter code: Glutaminase (310 aa).

Positions 67, 118, 161, 168, 192, 244, and 262 each coordinate substrate.

The protein belongs to the glutaminase family. In terms of assembly, homotetramer.

The enzyme catalyses L-glutamine + H2O = L-glutamate + NH4(+). In Legionella pneumophila subsp. pneumophila (strain Philadelphia 1 / ATCC 33152 / DSM 7513), this protein is Glutaminase.